A 445-amino-acid polypeptide reads, in one-letter code: Ribosomal protein uS12 methylthiotransferase RimO (445 aa).

Residues 13-123 form the MTTase N-terminal domain; the sequence is PRVGFVSLGC…VMAAIHHHLP (111 aa). Residues Cys22, Cys58, Cys87, Cys154, Cys158, and Cys161 each coordinate [4Fe-4S] cluster. In terms of domain architecture, Radical SAM core spans 140–377; the sequence is LTPKHYAYLK…MQQQEIISKQ (238 aa). Positions 380–445 constitute a TRAM domain; sequence AVKKGQQLRV…DIHDLWTEKI (66 aa).

This sequence belongs to the methylthiotransferase family. RimO subfamily. [4Fe-4S] cluster is required as a cofactor.

It localises to the cytoplasm. It carries out the reaction L-aspartate(89)-[ribosomal protein uS12]-hydrogen + (sulfur carrier)-SH + AH2 + 2 S-adenosyl-L-methionine = 3-methylsulfanyl-L-aspartate(89)-[ribosomal protein uS12]-hydrogen + (sulfur carrier)-H + 5'-deoxyadenosine + L-methionine + A + S-adenosyl-L-homocysteine + 2 H(+). In terms of biological role, catalyzes the methylthiolation of an aspartic acid residue of ribosomal protein uS12. This Nitrosomonas eutropha (strain DSM 101675 / C91 / Nm57) protein is Ribosomal protein uS12 methylthiotransferase RimO.